Consider the following 177-residue polypeptide: Large ribosomal subunit protein uL6 (177 aa).

This sequence belongs to the universal ribosomal protein uL6 family. As to quaternary structure, part of the 50S ribosomal subunit.

In terms of biological role, this protein binds to the 23S rRNA, and is important in its secondary structure. It is located near the subunit interface in the base of the L7/L12 stalk, and near the tRNA binding site of the peptidyltransferase center. This Methanococcoides burtonii (strain DSM 6242 / NBRC 107633 / OCM 468 / ACE-M) protein is Large ribosomal subunit protein uL6.